The following is a 503-amino-acid chain: Protein-cysteine N-palmitoyltransferase HHAT-like protein (503 aa).

8 helical membrane passes run 12–31 (LGLYSLVLSGALAYAGRGLL), 65–87 (WVMWFTNFRNVIVFALSGHVLFA), 100–122 (WMYAVYGVLAVVGTMGPWYLLLL), 127–149 (MVLYVASLLGQRWLCLALGLASL), 250–272 (AGLSAAAIVAVDVFFHFFYILTI), 287–309 (LAGLAYSNLVYDWVKAAVLFGVV), 426–445 (VRALCGAVNFWAIIMYNLVS), and 460–482 (ILTGFPQTTLAVLFVTYCGVQLV).

The protein belongs to the membrane-bound acyltransferase family. HHAT subfamily. Interacts with SHH.

It localises to the endoplasmic reticulum membrane. Negatively regulates N-terminal palmitoylation of SHH by HHAT/SKN. The chain is Protein-cysteine N-palmitoyltransferase HHAT-like protein (Hhatl) from Mus musculus (Mouse).